The chain runs to 284 residues: Tropomyosin (284 aa).

Residues 1-284 (MDAIKKKMQA…DQTFQELFGY (284 aa)) adopt a coiled-coil conformation. Residues 113–142 (LEKATHTADESDRVRKVMENRSFQDEERAN) are compositionally biased toward basic and acidic residues. A disordered region spans residues 113–143 (LEKATHTADESDRVRKVMENRSFQDEERANT).

This sequence belongs to the tropomyosin family.

Tropomyosin, in association with the troponin complex, plays a central role in the calcium dependent regulation of muscle contraction. The polypeptide is Tropomyosin (Acanthocheilonema viteae (Filarial nematode worm)).